Here is an 88-residue protein sequence, read N- to C-terminus: Small ribosomal subunit protein bS21 (88 aa).

The disordered stretch occupies residues 58–88 (ARKRAQREGLLPMTPRPVAAGGAAGAARPPR). A compositionally biased stretch (low complexity) spans 73–88 (RPVAAGGAAGAARPPR).

The protein belongs to the bacterial ribosomal protein bS21 family.

The polypeptide is Small ribosomal subunit protein bS21 (Mesorhizobium japonicum (strain LMG 29417 / CECT 9101 / MAFF 303099) (Mesorhizobium loti (strain MAFF 303099))).